A 97-amino-acid chain; its full sequence is UPF0250 protein RSc0326 (97 aa).

This sequence belongs to the UPF0250 family.

This chain is UPF0250 protein RSc0326, found in Ralstonia nicotianae (strain ATCC BAA-1114 / GMI1000) (Ralstonia solanacearum).